The primary structure comprises 32 residues: Photosystem II reaction center protein T (32 aa).

A helical membrane pass occupies residues 3-23; it reads TLVYTFLLIGTLAVLFAAVFF.

This sequence belongs to the PsbT family. In terms of assembly, PSII is composed of 1 copy each of membrane proteins PsbA, PsbB, PsbC, PsbD, PsbE, PsbF, PsbH, PsbI, PsbJ, PsbK, PsbL, PsbM, PsbT, PsbX, PsbY, PsbZ, Psb30/Ycf12, at least 3 peripheral proteins of the oxygen-evolving complex and a large number of cofactors. It forms dimeric complexes.

It localises to the plastid. Its subcellular location is the chloroplast thylakoid membrane. Its function is as follows. Found at the monomer-monomer interface of the photosystem II (PS II) dimer, plays a role in assembly and dimerization of PSII. PSII is a light-driven water plastoquinone oxidoreductase, using light energy to abstract electrons from H(2)O, generating a proton gradient subsequently used for ATP formation. The polypeptide is Photosystem II reaction center protein T (Guillardia theta (Cryptophyte)).